We begin with the raw amino-acid sequence, 482 residues long: Histone deacetylase 1 (482 aa).

A histone deacetylase region spans residues 9-321 (RKVCYYYDGD…WTYETAVALD (313 aa)). Positions 27 and 31 each coordinate 1D-myo-inositol 1,4,5,6-tetrakisphosphate. K74 is modified (N6-acetyllysine; alternate). K74 is covalently cross-linked (Glycyl lysine isopeptide (Lys-Gly) (interchain with G-Cter in SUMO2); alternate). The active site involves H141. Zn(2+) contacts are provided by D176 and H178. K220 bears the N6-acetyllysine mark. The residue at position 261 (C261) is an S-nitrosocysteine. Residue D264 participates in Zn(2+) binding. A 1D-myo-inositol 1,4,5,6-tetrakisphosphate-binding site is contributed by R270. Position 273 is an S-nitrosocysteine (C273). Acidic residues predominate over residues 390 to 400 (PEESGDEDEED). The tract at residues 390–482 (PEESGDEDEE…KGVKEEVKMA (93 aa)) is disordered. Residues S393, S406, S409, S421, and S423 each carry the phosphoserine modification. The span at 401–416 (PDKRISICSSDKRIAC) shows a compositional bias: basic and acidic residues. Over residues 417-427 (EEEFSDSDEEG) the composition is skewed to acidic residues. K432 bears the N6-methylated lysine; by EHMT2 mark. Residue K438 forms a Glycyl lysine isopeptide (Lys-Gly) (interchain with G-Cter in SUMO2) linkage. Basic and acidic residues predominate over residues 443-482 (VKTEDEKEKDPEEKKEVTEEEKTKEEKPEAKGVKEEVKMA). A Glycyl lysine isopeptide (Lys-Gly) (interchain with G-Cter in SUMO2); alternate cross-link involves residue K444. K444 participates in a covalent cross-link: Glycyl lysine isopeptide (Lys-Gly) (interchain with G-Cter in SUMO); alternate. Residues K456, K457, and K473 each participate in a glycyl lysine isopeptide (Lys-Gly) (interchain with G-Cter in SUMO2) cross-link. K476 participates in a covalent cross-link: Glycyl lysine isopeptide (Lys-Gly) (interchain with G-Cter in SUMO2); alternate. Residue K476 forms a Glycyl lysine isopeptide (Lys-Gly) (interchain with G-Cter in SUMO); alternate linkage. A Glycyl lysine isopeptide (Lys-Gly) (interchain with G-Cter in SUMO2) cross-link involves residue K480.

It belongs to the histone deacetylase family. HD type 1 subfamily. Part of the core histone deacetylase (HDAC) complex composed of HDAC1, HDAC2, RBBP4 and RBBP7, the core complex associates with SIN3, SAP18 and SAP30 to form the SIN3 HDAC complex. Component of the nucleosome remodeling and deacetylase (NuRD) repressor complex, composed of core proteins MTA1, MTA2, MTA3, RBBP4, RBBP7, HDAC1, HDAC2, MBD2, MBD3, and peripherally associated proteins CDK2AP1, CDK2AP2, GATAD2A, GATAD2B, CHD3, CHD4 and CHD5. The exact stoichiometry of the NuRD complex is unknown, and some subunits such as MBD2 and MBD3, GATAD2A and GATAD2B, and CHD3, CHD4 and CHD5 define mutually exclusive NuRD complexes. Component of a BHC histone deacetylase complex that contains HDAC1, HDAC2, HMG20B/BRAF35, KDM1A, RCOR1/CoREST and PHF21A/BHC80. The BHC complex may also contain ZMYM2, ZNF217, ZMYM3, GSE1 and GTF2I. Component of a mSin3A corepressor complex that contains SIN3A, SAP130, SUDS3/SAP45, ARID4B/SAP180, HDAC1 and HDAC2. Found in a trimeric complex with APBB1 and TSHZ3; the interaction between HDAC1 and APBB1 is mediated by TSHZ3. Forms a complex comprising APPL1, RUVBL2, APPL2, CTNNB1 and HDAC2. Component of a RCOR/GFI/KDM1A/HDAC complex. Part of a complex composed of TRIM28, HDAC1, HDAC2 and EHMT2. Part of a complex containing at least CDYL, MIER1, MIER2, HDAC1 and HDAC2. The large PER complex involved in the histone deacetylation is composed of at least HDAC1, PER2, SFPQ and SIN3A. Associates with the 9-1-1 complex; interacts with HUS1. Found in a complex with DNMT3A and HDAC7. Found in a complex with YY1, SIN3A and GON4L. Identified in a histone deacetylase complex that contains DNTTIP1, HDAC1 and MIDEAS; this complex assembles into a tetramer that contains four copies of each protein chain. Found in a complex composed of at least SINHCAF, SIN3A, HDAC1, SAP30, RBBP4, OGT and TET1. Component of the SIN3B complex, which includes SIN3B, HDAC1, PHF12 and MORF4L1. Interacts with GFI1; the interaction is direct. Interacts directly with GFI1B. Interacts with TSHZ3 (via N-terminus); the interaction is direct. Interacts with APEX1; the interaction is not dependent on the acetylated status of APEX1. Interacts with BANP. Interacts with BAZ2A/TIP5. Interacts with BCL6. Interacts with BCOR. Interacts with BHLHE40/DEC1. Interacts with BRCC3; this interaction is enhanced in the presence of PWWP2B. Interacts with BRMS1. Interacts with BRMS1L. Interacts with C10orf90/FATS (via its N-terminal); the interaction prevents binding of HDAC1 to CDKN1A/p21 and facilitates the acetylation and stabilization of CDKN1A/p21. Interacts with CBFA2T3. Interacts with CCAR2. Interacts with CDK2AP1. Interacts with CHD3. Interacts with CHD4. Interacts with CHFR. Interacts with CIART. Interacts with CDKN1A/p21. Interacts with CDK5 complexed to CDK5R1 (p25). Interacts with CRY1. Interacts with DAXX. Interacts with DDIT3/CHOP. Interacts with DDX5. Interacts with DHX36; this interaction occurs in a RNA-dependent manner. Interacts with DNMT1. Interacts with DNTTIP1. Interacts with E4F1. Interacts with EP300. Interacts with ERCC6. Interacts with GATAD2A. Interacts with HCFC1. Interacts with HDAC9. Interacts with HUS1. Interacts with INSM1. Interacts with KDM4A. Interacts with KDM5A; this interaction impairs histone deacetylation. Interacts with KDM5B. Interacts with KLF1. Interacts with MBD3L2. Interacts with MIER1. Interacts with NFE4. Interacts with NR4A2/NURR1. Interacts with NR1D2 (via C-terminus). Interacts with NRIP1. Interacts with NSD2. Interacts with PACS2. Interacts with PHB2. Interacts with PPHLN1. Interacts with PRDM6. Interacts with PRDM16. Interacts with PWWP2A in a MTA1-dependent manner. Interacts with PWWP2B. Interacts with RB1. Interacts with RERE. Interacts with SANBR (via the BTB domain). Interacts with SAMSN1. Interacts with SAP30L. Interacts with SETDB1. Interacts with SIN3A. Interacts with SMAD3. Interacts with SMAD4; positively regulated by ZBTB7A. Interacts with SMARCAD1. Interacts with SMARCA4/BRG1. Interacts with SMYD2. Interacts with SMYD4 (via MYND-type zinc finger). Interacts with SP1; the interaction deacetylates SP1 and regulates its transcriptional activity. Interacts with SP3; the interaction deacetylates SP3 and regulates its transcriptional activity. In vitro, C(18) ceramides increase this interaction and the subsequent SP3 deacetylation and SP3-mediated repression of the TERT promoter. Interacts with SPEN/MINT. Interacts with SPHK2. Interacts with SUV39H1. Interacts with TGIF. Interacts with TGIF2. Interacts with TRAF6. Interacts with TRIM28; the interaction recruits HDAC1 to E2F1 and inhibits its acetylation. Interacts with TSC22D3 isoform 1; this interaction affects HDAC1 activity on MYOG promoter and thus inhibits MYOD1 transcriptional activity. Interacts with UHRF1. Interacts with UHRF2. Interacts with ZBTB7A. Interacts with ZMYND8. Interacts with ZMYND15. Interacts with ZNF431. Interacts with ZNF516; this interaction is enhanced in the presence of PWWP2B. Interacts with ZNF541. Interacts with ZNF638. Interacts with ZNHIT1. Interacts with the non-histone region of MACROH2A1. Identified in a complex with HDAC2, KCTD19, DNTTIP1 and ZNF541. Interacts with MSX3. Interacts with VRK1. Requires Zn(2+) as cofactor. Post-translationally, sumoylated on Lys-444 and Lys-476; which promotes enzymatic activity. Desumoylated by SENP1. In terms of processing, phosphorylation on Ser-421 and Ser-423 promotes enzymatic activity and interactions with NuRD and SIN3 complexes. Phosphorylated by CDK5. Ubiquitinated by CHFR and KCTD11, leading to its degradation by the proteasome.

It is found in the nucleus. The catalysed reaction is N(6)-acetyl-L-lysyl-[histone] + H2O = L-lysyl-[histone] + acetate. The enzyme catalyses N(6)-acetyl-L-lysyl-[protein] + H2O = L-lysyl-[protein] + acetate. It catalyses the reaction N(6)-(2E)-butenoyl-L-lysyl-[protein] + H2O = (2E)-2-butenoate + L-lysyl-[protein]. It carries out the reaction N(6)-[(S)-lactoyl]-L-lysyl-[protein] + H2O = (S)-lactate + L-lysyl-[protein]. Inositol tetraphosphate (1D-myo-inositol 1,4,5,6-tetrakisphosphate) may act as an intermolecular glue between HDAC1 and N-Cor repressor complex components. Functionally, histone deacetylase that catalyzes the deacetylation of lysine residues on the N-terminal part of the core histones (H2A, H2B, H3 and H4). Histone deacetylation gives a tag for epigenetic repression and plays an important role in transcriptional regulation, cell cycle progression and developmental events. Histone deacetylases act via the formation of large multiprotein complexes. Acts as a component of the histone deacetylase NuRD complex which participates in the remodeling of chromatin. As part of the SIN3B complex is recruited downstream of the constitutively active genes transcriptional start sites through interaction with histones and mitigates histone acetylation and RNA polymerase II progression within transcribed regions contributing to the regulation of transcription. Also functions as a deacetylase for non-histone targets, such as NR1D2, RELA, SP1, SP3, STAT3 and TSHZ3. Deacetylates SP proteins, SP1 and SP3, and regulates their function. Component of the BRG1-RB1-HDAC1 complex, which negatively regulates the CREST-mediated transcription in resting neurons. Upon calcium stimulation, HDAC1 is released from the complex and CREBBP is recruited, which facilitates transcriptional activation. Deacetylates TSHZ3 and regulates its transcriptional repressor activity. Deacetylates 'Lys-310' in RELA and thereby inhibits the transcriptional activity of NF-kappa-B. Deacetylates NR1D2 and abrogates the effect of KAT5-mediated relieving of NR1D2 transcription repression activity. Component of a RCOR/GFI/KDM1A/HDAC complex that suppresses, via histone deacetylase (HDAC) recruitment, a number of genes implicated in multilineage blood cell development. Involved in CIART-mediated transcriptional repression of the circadian transcriptional activator: CLOCK-BMAL1 heterodimer. Required for the transcriptional repression of circadian target genes, such as PER1, mediated by the large PER complex or CRY1 through histone deacetylation. In addition to protein deacetylase activity, also has protein-lysine deacylase activity: acts as a protein decrotonylase and delactylase by mediating decrotonylation ((2E)-butenoyl) and delactylation (lactoyl) of histones, respectively. The chain is Histone deacetylase 1 (Hdac1) from Rattus norvegicus (Rat).